A 302-amino-acid chain; its full sequence is 33 kDa chaperonin (302 aa).

2 disulfides stabilise this stretch: Cys247–Cys249 and Cys280–Cys283.

This sequence belongs to the HSP33 family. Post-translationally, under oxidizing conditions two disulfide bonds are formed involving the reactive cysteines. Under reducing conditions zinc is bound to the reactive cysteines and the protein is inactive.

The protein resides in the cytoplasm. Redox regulated molecular chaperone. Protects both thermally unfolding and oxidatively damaged proteins from irreversible aggregation. Plays an important role in the bacterial defense system toward oxidative stress. The protein is 33 kDa chaperonin of Prochlorococcus marinus (strain MIT 9301).